The following is a 622-amino-acid chain: DNA mismatch repair protein MutL (622 aa).

The protein belongs to the DNA mismatch repair MutL/HexB family.

This protein is involved in the repair of mismatches in DNA. It is required for dam-dependent methyl-directed DNA mismatch repair. May act as a 'molecular matchmaker', a protein that promotes the formation of a stable complex between two or more DNA-binding proteins in an ATP-dependent manner without itself being part of a final effector complex. The polypeptide is DNA mismatch repair protein MutL (Actinobacillus pleuropneumoniae serotype 3 (strain JL03)).